The following is a 171-amino-acid chain: CASP-like protein 1C3 (171 aa).

Residues 1–6 (MVKPKR) are Cytoplasmic-facing. Residues 7–27 (LLSLLLRLIAFGATLAAVIIM) form a helical membrane-spanning segment. Over 28-52 (ATSHEKGSFFALSYEAKYSDTPAFK) the chain is Extracellular. The chain crosses the membrane as a helical span at residues 53 to 73 (YFVIANAIVTVYGFLALFIPS). Topologically, residues 74-79 (ESPLWR) are cytoplasmic. A helical membrane pass occupies residues 80-100 (LVLALDLVFTMLLISSISAAL). Residues 101-130 (AVAQVGKKGNSSAGWLPVCGQVTKYCNQVT) lie on the Extracellular side of the membrane. Residue Asn-110 is glycosylated (N-linked (GlcNAc...) asparagine). Residues 131–151 (GALVAGFIAIITYIILLLYSI) traverse the membrane as a helical segment. Topologically, residues 152 to 171 (YTFLNSLLGKTPCRLSSPGI) are cytoplasmic.

Belongs to the Casparian strip membrane proteins (CASP) family. As to quaternary structure, homodimer and heterodimers.

It is found in the cell membrane. This Populus trichocarpa (Western balsam poplar) protein is CASP-like protein 1C3.